The following is a 493-amino-acid chain: ATP-dependent RNA helicase dbp3 (493 aa).

A disordered region spans residues 1 to 38 (MTKRDYQNDTTAESRPTKKSKGEKKVKETKEKKEKKVK). The span at 23 to 34 (EKKVKETKEKKE) shows a compositional bias: basic and acidic residues. The Q motif motif lies at 97–105 (SFKSPTSIQ). The 177-residue stretch at 109–285 (WPLLFGGRDV…STFMSSPVTV (177 aa)) folds into the Helicase ATP-binding domain. 122–129 (AETGSGKT) is an ATP binding site. Residues 232 to 235 (DEAD) carry the DEAD box motif. The Helicase C-terminal domain maps to 316 to 462 (RLVQLLKQHQ…EVPEELLKFG (147 aa)).

This sequence belongs to the DEAD box helicase family. DDX5/DBP2 subfamily.

It is found in the nucleus. The protein resides in the nucleolus. The enzyme catalyses ATP + H2O = ADP + phosphate + H(+). In terms of biological role, ATP-dependent RNA helicase required for 60S ribosomal subunit synthesis. Involved in efficient pre-rRNA processing, predominantly at site A3, which is necessary for the normal formation of 25S and 5.8S rRNAs. The chain is ATP-dependent RNA helicase dbp3 (dbp3) from Aspergillus terreus (strain NIH 2624 / FGSC A1156).